Reading from the N-terminus, the 2207-residue chain is Genome polyprotein (2207 aa).

Glycine 2 carries N-myristoyl glycine; by host lipidation. Over 2-1518 (GAQVSSQKVG…NINRAMTILQ (1517 aa)) the chain is Cytoplasmic. An amphipathic alpha-helix region spans residues 579 to 599 (GLGDLIEGVVEGVTRNALTPL). Polar residues predominate over residues 597-613 (TPLTPANNLPDTQSSGP). Disordered stretches follow at residues 597 to 620 (TPLTPANNLPDTQSSGPAHSKETP) and 628 to 647 (GATNPLVPSDTVQTRHVIQK). Residues histidine 899 and aspartate 917 each act as for protease 2A activity in the active site. Residues cysteine 934 and cysteine 936 each contribute to the Zn(2+) site. Cysteine 988 serves as the catalytic For protease 2A activity. Residues cysteine 994 and histidine 996 each contribute to the Zn(2+) site. The interval 1126–1198 (GDSWLKKFTE…HQSCPSQEHQ (73 aa)) is membrane-binding. The tract at residues 1126-1264 (GDSWLKKFTE…SPGTGKSVAT (139 aa)) is oligomerization. Residues 1147–1151 (SNKIS) are RNA-binding. Residues 1230–1386 (EHTINNYVQF…SEYSRDGKLN (157 aa)) form the SF3 helicase domain. An ATP-binding site is contributed by 1254–1261 (GSPGTGKS). Cysteine 1394, cysteine 1397, cysteine 1406, and cysteine 1411 together coordinate Zn(2+). Residues 1394-1411 (CKNCHHPANFKRCCPLVC) form a C4-type zinc finger. Residues 1438 to 1445 (ERNRRSSI) are RNA-binding. The segment at 1449 to 1454 (MEALFQ) is oligomerization. An intramembrane segment occupies 1519–1534 (AVTTFAAVAGVVYVMY). Residues 1535–2207 (KLFAGHQGAY…TLYRRWLDSF (673 aa)) lie on the Cytoplasmic side of the membrane. At tyrosine 1544 the chain carries O-(5'-phospho-RNA)-tyrosine. In terms of domain architecture, Peptidase C3 spans 1564–1742 (GPGFDYAVAM…FAAALKRSYF (179 aa)). Residues histidine 1603, glutamate 1634, and cysteine 1710 each act as for protease 3C activity in the active site. The 116-residue stretch at 1973–2088 (EKLFAFDYTG…SYPHEVDASL (116 aa)) folds into the RdRp catalytic domain. 2 residues coordinate Mg(2+): aspartate 1979 and aspartate 2074.

This sequence belongs to the picornaviruses polyprotein family. As to quaternary structure, interacts with capsid protein VP1 and capsid protein VP3 to form heterotrimeric protomers. Interacts with capsid protein VP0, and capsid protein VP3 to form heterotrimeric protomers. Interacts with human PVR. Five protomers subsequently associate to form pentamers which serve as building blocks for the capsid. Interacts with capsid protein VP2, capsid protein VP3 and capsid protein VP4 following cleavage of capsid protein VP0. In terms of assembly, interacts with capsid protein VP1 and capsid protein VP3 in the mature capsid. As to quaternary structure, interacts with capsid protein VP0 and capsid protein VP1 to form heterotrimeric protomers. Five protomers subsequently associate to form pentamers which serve as building blocks for the capsid. Interacts with capsid protein VP4 in the mature capsid. Interacts with protein 2C; this interaction may be important for virion morphogenesis. Interacts with capsid protein VP1 and capsid protein VP3. In terms of assembly, homodimer. As to quaternary structure, homohexamer; forms a hexameric ring structure with 6-fold symmetry characteristic of AAA+ ATPases. Interacts (via N-terminus) with host RTN3 (via reticulon domain); this interaction is important for viral replication. Interacts with capsid protein VP3; this interaction may be important for virion morphogenesis. Interacts with protein 3CD. In terms of assembly, homodimer. Interacts with host GBF1. Interacts (via GOLD domain) with host ACBD3 (via GOLD domain); this interaction allows the formation of a viral protein 3A/ACBD3 heterotetramer with a 2:2 stoichiometry, which will stimulate the recruitment of host PI4KB in order to synthesize PI4P at the viral RNA replication sites. As to quaternary structure, interacts with RNA-directed RNA polymerase. Interacts with protein 3AB and with RNA-directed RNA polymerase. In terms of assembly, interacts with Viral protein genome-linked and with protein 3CD. Mg(2+) serves as cofactor. In terms of processing, specific enzymatic cleavages in vivo by the viral proteases yield processing intermediates and the mature proteins. Myristoylation is required for the formation of pentamers during virus assembly. Further assembly of 12 pentamers and a molecule of genomic RNA generates the provirion. Post-translationally, during virion maturation, immature virions are rendered infectious following cleavage of VP0 into VP4 and VP2. This maturation seems to be an autocatalytic event triggered by the presence of RNA in the capsid and it is followed by a conformational change infectious virion. In terms of processing, myristoylation is required during RNA encapsidation and formation of the mature virus particle. VPg is uridylylated by the polymerase into VPg-pUpU. This acts as a nucleotide-peptide primer for the genomic RNA replication.

It localises to the virion. It is found in the host cytoplasm. The protein resides in the host cytoplasmic vesicle membrane. Its subcellular location is the host nucleus. It carries out the reaction a ribonucleoside 5'-triphosphate + H2O = a ribonucleoside 5'-diphosphate + phosphate + H(+). It catalyses the reaction Selective cleavage of Tyr-|-Gly bond in the picornavirus polyprotein.. The catalysed reaction is RNA(n) + a ribonucleoside 5'-triphosphate = RNA(n+1) + diphosphate. The enzyme catalyses Selective cleavage of Gln-|-Gly bond in the poliovirus polyprotein. In other picornavirus reactions Glu may be substituted for Gln, and Ser or Thr for Gly.. Replication or transcription is subject to high level of random mutations by the nucleotide analog ribavirin. Forms an icosahedral capsid of pseudo T=3 symmetry with capsid proteins VP2 and VP3. The capsid is 300 Angstroms in diameter, composed of 60 copies of each capsid protein and enclosing the viral positive strand RNA genome. Capsid protein VP1 mainly forms the vertices of the capsid. Capsid protein VP1 interacts with host cell receptor PVR to provide virion attachment to target host cells. This attachment induces virion internalization predominantly through clathrin- and caveolin-independent endocytosis in Hela cells and through caveolin-mediated endocytosis in brain microvascular endothelial cells. Tyrosine kinases are probably involved in the entry process. Virus binding to PVR induces increased junctional permeability and rearrangement of junctional proteins. Modulation of endothelial tight junctions, as well as cytolytic infection of endothelial cells themselves, may result in loss of endothelial integrity which may help the virus to reach the CNS. After binding to its receptor, the capsid undergoes conformational changes. Capsid protein VP1 N-terminus (that contains an amphipathic alpha-helix) and capsid protein VP4 are externalized. Together, they shape a pore in the host membrane through which viral genome is translocated to host cell cytoplasm. Its function is as follows. Forms an icosahedral capsid of pseudo T=3 symmetry with capsid proteins VP2 and VP3. The capsid is 300 Angstroms in diameter, composed of 60 copies of each capsid protein and enclosing the viral positive strand RNA genome. Functionally, lies on the inner surface of the capsid shell. After binding to the host receptor, the capsid undergoes conformational changes. Capsid protein VP4 is released, Capsid protein VP1 N-terminus is externalized, and together, they shape a pore in the host membrane through which the viral genome is translocated into the host cell cytoplasm. In terms of biological role, component of immature procapsids, which is cleaved into capsid proteins VP4 and VP2 after maturation. Allows the capsid to remain inactive before the maturation step. Cysteine protease that cleaves viral polyprotein and specific host proteins. It is responsible for the autocatalytic cleavage between the P1 and P2 regions, which is the first cleavage occurring in the polyprotein. Also cleaves the host translation initiation factor EIF4G1, in order to shut down the capped cellular mRNA translation. Inhibits the host nucleus-cytoplasm protein and RNA trafficking by cleaving host members of the nuclear pores including NUP98, NUP62 and NUP153. Counteracts stress granule formation probably by antagonizing its assembly or promoting its dissassembly. Cleaves and inhibits host IFIH1/MDA5, thereby inhibiting the type-I IFN production and the establishment of the antiviral state. Cleaves and inhibits host MAVS, thereby inhibiting the type-I IFN production and the establishment of the antiviral state. Its function is as follows. Plays an essential role in the virus replication cycle by acting as a viroporin. Creates a pore in the host endoplasmic reticulum and as a consequence releases Ca2+ in the cytoplasm of infected cell. In turn, high levels of cytoplasmic calcium may trigger membrane trafficking and transport of viral ER-associated proteins to viroplasms, sites of viral genome replication. Functionally, induces and associates with structural rearrangements of intracellular membranes. Displays RNA-binding, nucleotide binding and NTPase activities. May play a role in virion morphogenesis and viral RNA encapsidation by interacting with the capsid protein VP3. In terms of biological role, localizes the viral replication complex to the surface of membranous vesicles. Together with protein 3CD binds the Cis-Active RNA Element (CRE) which is involved in RNA synthesis initiation. Acts as a cofactor to stimulate the activity of 3D polymerase, maybe through a nucleid acid chaperone activity. Localizes the viral replication complex to the surface of membranous vesicles. It inhibits host cell endoplasmic reticulum-to-Golgi apparatus transport and causes the disassembly of the Golgi complex, possibly through GBF1 interaction. This would result in depletion of MHC, trail receptors and IFN receptors at the host cell surface. Plays an essential role in viral RNA replication by recruiting ACBD3 and PI4KB at the viral replication sites, thereby allowing the formation of the rearranged membranous structures where viral replication takes place. Its function is as follows. Acts as a primer for viral RNA replication and remains covalently bound to viral genomic RNA. VPg is uridylylated prior to priming replication into VPg-pUpU. The oriI viral genomic sequence may act as a template for this. The VPg-pUpU is then used as primer on the genomic RNA poly(A) by the RNA-dependent RNA polymerase to replicate the viral genome. During genome replication, the VPg-RNA linkage is removed by the host TDP2, thereby accelerating replication. During the late stage of the replication cycle, host TDP2 is excluded from sites of viral RNA synthesis and encapsidation, allowing for the generation of progeny virions. Functionally, involved in the viral replication complex and viral polypeptide maturation. It exhibits protease activity with a specificity and catalytic efficiency that is different from protease 3C. Protein 3CD lacks polymerase activity. Protein 3CD binds to the 5'UTR of the viral genome. In terms of biological role, major viral protease that mediates proteolytic processing of the polyprotein. Cleaves host EIF5B, contributing to host translation shutoff. Also cleaves host PABPC1, contributing to host translation shutoff. Cleaves host RIGI and thus contributes to the inhibition of type I interferon production. Cleaves host NLRP1, triggers host N-glycine-mediated degradation of the autoinhibitory NLRP1 N-terminal fragment. Inhibits the integrated stress response (ISR) in the infected cell by cleaving host G3BP1. Stress granule formation is thus inhibited, which allows protein synthesis and viral replication. Replicates the viral genomic RNA on the surface of intracellular membranes. May form linear arrays of subunits that propagate along a strong head-to-tail interaction called interface-I. Covalently attaches UMP to a tyrosine of VPg, which is used to prime RNA synthesis. The positive stranded RNA genome is first replicated at virus induced membranous vesicles, creating a dsRNA genomic replication form. This dsRNA is then used as template to synthesize positive stranded RNA genomes. ss(+)RNA genomes are either translated, replicated or encapsidated. This is Genome polyprotein from Homo sapiens (Human).